Reading from the N-terminus, the 304-residue chain is N-acetyl-D-glucosamine kinase (304 aa).

Residues 4 to 11 (GFDMGGTK) and 133 to 140 (GLGGGLVI) each bind ATP. 4 residues coordinate Zn(2+): His157, Cys177, Cys179, and Cys184.

The protein belongs to the ROK (NagC/XylR) family. NagK subfamily.

It carries out the reaction N-acetyl-D-glucosamine + ATP = N-acetyl-D-glucosamine 6-phosphate + ADP + H(+). Its pathway is cell wall biogenesis; peptidoglycan recycling. In terms of biological role, catalyzes the phosphorylation of N-acetyl-D-glucosamine (GlcNAc) derived from cell-wall degradation, yielding GlcNAc-6-P. This is N-acetyl-D-glucosamine kinase from Pectobacterium carotovorum subsp. carotovorum (strain PC1).